Consider the following 325-residue polypeptide: Cytosolic Fe-S cluster assembly factor Nubp1 homolog (325 aa).

The segment at 1–26 (MSSGADVPSDAPAHCPGTQSDDAGKA) is disordered. [4Fe-4S] cluster is bound by residues C15, C29, C32, and C38. 68-75 (GKGGVGKS) contacts ATP. The [4Fe-4S] cluster site is built by C243 and C246.

This sequence belongs to the Mrp/NBP35 ATP-binding proteins family. NUBP1/NBP35 subfamily. In terms of assembly, heterotetramer of 2 Nubp1 and 2 Nubp2 chains. [4Fe-4S] cluster is required as a cofactor.

It localises to the cytoplasm. Component of the cytosolic iron-sulfur (Fe/S) protein assembly (CIA) machinery. Required for maturation of extramitochondrial Fe-S proteins. The Nubp1-Nubp2 heterotetramer forms a Fe-S scaffold complex, mediating the de novo assembly of an Fe-S cluster and its transfer to target apoproteins. The protein is Cytosolic Fe-S cluster assembly factor Nubp1 homolog of Anopheles gambiae (African malaria mosquito).